Here is a 297-residue protein sequence, read N- to C-terminus: MAIVLDGKKVAGQIKADLASRVAGLARMGMVPGLGTVLVGDDPGSMKYVEGKHRDCEEVGIASIRRQLPATATTEDVLAVVRDLNEDPACTGYIIQLPLPAHIDSNAIIGAIDPTKDADGMHPYNLGELVLHVRGDITTPLPCTPRGVLALLDAYGIELAGRNVCVLGRGITIGRTIGLMLTRSGVNATVTLCHTGTRNIEEHIRRADVVIAAVGVAGFVQVEHVKPGAVLIDVGVSRVFDEQAGRMRIVGDVDSEAHAVAGAYSPNPGGVGPMTRAMLLANVVEQAERMAGIREDS.

Residues 168–170 (GRG), Thr195, and Val236 each bind NADP(+).

This sequence belongs to the tetrahydrofolate dehydrogenase/cyclohydrolase family. As to quaternary structure, homodimer.

The catalysed reaction is (6R)-5,10-methylene-5,6,7,8-tetrahydrofolate + NADP(+) = (6R)-5,10-methenyltetrahydrofolate + NADPH. It catalyses the reaction (6R)-5,10-methenyltetrahydrofolate + H2O = (6R)-10-formyltetrahydrofolate + H(+). It participates in one-carbon metabolism; tetrahydrofolate interconversion. Its function is as follows. Catalyzes the oxidation of 5,10-methylenetetrahydrofolate to 5,10-methenyltetrahydrofolate and then the hydrolysis of 5,10-methenyltetrahydrofolate to 10-formyltetrahydrofolate. The protein is Bifunctional protein FolD of Bifidobacterium animalis subsp. lactis (strain AD011).